Consider the following 362-residue polypeptide: Acyl-CoA-binding domain-containing protein 3 (362 aa).

Positions 1–22 (MEVFLEMLLTAVVALLFSFLLA) are cleaved as a signal peptide. Disordered regions lie at residues 132-151 (QDEQ…SPEN) and 193-214 (VEKS…EKTE). Residues 192 to 221 (RVEKSSNMVEESDAEAENEEKTELTIEEDD) are a coiled coil. The ACB domain occupies 231–318 (LEKAFAAAVN…VSKEIPGLTK (88 aa)). An acyl-CoA is bound by residues 260 to 264 (FGLHK), Lys286, and Tyr305. A disordered region spans residues 329–362 (METSVGLPPNSGSLEDPTNLVTTGVDESSKNGIP).

This sequence belongs to the ACBP family. As to expression, expressed in roots, stems, leaves, flowers and siliques.

It is found in the secreted. Its subcellular location is the extracellular space. In terms of biological role, binds medium- and long-chain acyl-CoA esters with very high affinity. Can interact in vitro with arachidonyl-CoA, barely with oleoyl-CoA, but not with palmitoyl-CoA. The protein is Acyl-CoA-binding domain-containing protein 3 (ACBP3) of Arabidopsis thaliana (Mouse-ear cress).